The chain runs to 1441 residues: Protein clueless (1441 aa).

Disordered regions lie at residues 1–79 and 106–131; these read MALD…EAAT and VAAN…ELES. Residues 8-22 are compositionally biased toward polar residues; it reads KNSSSAATGDANTVK. The segment covering 54-63 has biased composition (basic residues); sequence AKKKGKKNRN. Composition is skewed to low complexity over residues 64–79 and 106–126; these read KSPP…EAAT and VAAN…AASS. Position 273 is a phosphoserine (Ser-273). A Clu domain is found at 427 to 669; that stretch reads RAEDAFSSKL…RTFPPDVNFL (243 aa). The segment covering 726–753 has biased composition (basic and acidic residues); that stretch reads KKQDEAKEGTKEPASETEKESPPKAITE. 2 disordered regions span residues 726-769 and 961-1009; these read KKQD…GETK and EIHK…SGGT. Positions 964–977 are enriched in basic residues; it reads KKRTNTKYNKHKSS. The segment covering 978–1009 has biased composition (low complexity); the sequence is KSSGSGSKQSGQTSNQNGTSTSPSSSTASGGT. TPR repeat units follow at residues 1109-1142, 1235-1268, and 1270-1303; these read AYNF…LNNV, ALID…NLKY, and GAKA…EKET.

Belongs to the CLU family.

Its subcellular location is the cytoplasm. Functionally, mRNA-binding protein involved in proper cytoplasmic distribution of mitochondria. In Drosophila willistoni (Fruit fly), this protein is Protein clueless.